The sequence spans 565 residues: Nephronectin (565 aa).

The first 19 residues, 1 to 19 (MDFLLALVLVSSLYLQAAA), serve as a signal peptide directing secretion. In terms of domain architecture, EGF-like 1 spans 52-87 (SWGQCQPVCQPRCKHGECIGPNKCKCHPGYAGKTCN). 6 disulfides stabilise this stretch: Cys56/Cys69, Cys60/Cys75, Cys77/Cys86, Cys93/Cys104, Cys100/Cys113, and Cys115/Cys127. In terms of domain architecture, EGF-like 2; calcium-binding spans 89–128 (DLNECGLKPRPCKHRCMNTYGSYKCYCLNGYMLMPDGSCS). The region spanning 132–168 (TCSMANCQYGCDVVKGQIRCQCPSPGLQLAPDGRTCV) is the EGF-like 3 domain. The region spanning 169 to 213 (DVDECATGRASCPRFRQCVNTFGSYICKCHKGFDLMYIGGKYQCH) is the EGF-like 4; calcium-binding domain. 6 disulfide bridges follow: Cys173-Cys186, Cys180-Cys195, Cys197-Cys212, Cys218-Cys231, Cys225-Cys240, and Cys242-Cys253. One can recognise an EGF-like 5; calcium-binding domain in the interval 214-254 (DIDECSLGQYQCSSFARCYNIRGSYKCKCKEGYQGDGLTCV). Residues 301 to 389 (YIPPIITNRP…KPRGDVFIPR (89 aa)) are disordered. Residues 304–316 (PIITNRPTSKPTT) show a composition bias toward low complexity. Residues 317–347 (RPTPKPTPIPTPPPPPPLPTELRTPLPPTTP) are compositionally biased toward pro residues. Residues 382 to 384 (RGD) carry the Integrin interaction motif. An MAM domain is found at 420 to 563 (HSCNFDHGLC…VSLKKGHCSE (144 aa)).

Belongs to the nephronectin family. As to quaternary structure, homodimer and homotrimer. In terms of tissue distribution, expressed in kidney and lung and to a lower extent in brain, pregnant uterus, placenta, thyroid gland and blood vessels.

It localises to the secreted. It is found in the extracellular space. Its subcellular location is the extracellular matrix. Its function is as follows. Functional ligand of integrin alpha-8/beta-1 in kidney development. Regulates the expression of GDNF with integrin alpha-8/beta-1 which is essential for kidney development. May also play a role in the development and function of various tissues, regulating cell adhesion, spreading and survival through the binding of several integrins. In Homo sapiens (Human), this protein is Nephronectin (NPNT).